We begin with the raw amino-acid sequence, 447 residues long: Cytochrome P450 BJ-4 homolog (447 aa).

Cys-392 is a heme binding site.

It belongs to the cytochrome P450 family. Heme is required as a cofactor.

Functionally, cytochromes P450 are a group of heme-thiolate monooxygenases. They oxidize a variety of structurally unrelated compounds, including steroids, fatty acids, and xenobiotics. The protein is Cytochrome P450 BJ-4 homolog (cyp117A2) of Sinorhizobium fredii (strain NBRC 101917 / NGR234).